Reading from the N-terminus, the 94-residue chain is MQNNTTGMDTKSLKNCGQPKAVCTHCKHSPPCPQPGCVTKRPPVPPRLYLPPPVPIRQPNTKDIDNVEFKYLTRYEQHVIRMLRLCNMYQNLEK.

In terms of assembly, interacts with host GRB2; this interaction alters host cell environment by modulating host signaling pathways.

The protein resides in the host cytoplasm. Enhances viral DNA replication and virion release. Mechansitically, optimizes viral DNA replication by interacting with host GRB2 to inhibit the negative effect of ERK signaling on B19 viral replication. Plays a role in viral infectivity. Induces apoptosis of primary erythroid progenitor cells. This is Host-modulation protein 11K (11K) from Human parvovirus B19 (strain HV) (HPV B19).